Here is a 201-residue protein sequence, read N- to C-terminus: dITP/XTP pyrophosphatase (201 aa).

Residue 7–12 (TNNKGK) participates in substrate binding. Mg(2+) is bound by residues Glu-40 and Asp-69. The Proton acceptor role is filled by Asp-69. Residues Ser-70, 152 to 155 (FGYD), Lys-175, and 180 to 181 (HR) each bind substrate.

Belongs to the HAM1 NTPase family. Homodimer. Mg(2+) serves as cofactor.

The catalysed reaction is XTP + H2O = XMP + diphosphate + H(+). It carries out the reaction dITP + H2O = dIMP + diphosphate + H(+). It catalyses the reaction ITP + H2O = IMP + diphosphate + H(+). Pyrophosphatase that catalyzes the hydrolysis of nucleoside triphosphates to their monophosphate derivatives, with a high preference for the non-canonical purine nucleotides XTP (xanthosine triphosphate), dITP (deoxyinosine triphosphate) and ITP. Seems to function as a house-cleaning enzyme that removes non-canonical purine nucleotides from the nucleotide pool, thus preventing their incorporation into DNA/RNA and avoiding chromosomal lesions. This chain is dITP/XTP pyrophosphatase, found in Desulforamulus reducens (strain ATCC BAA-1160 / DSM 100696 / MI-1) (Desulfotomaculum reducens).